Reading from the N-terminus, the 515-residue chain is Envelope glycoprotein (515 aa).

The first 33 residues, 1-33 (MPKKRRSRRRPQPIIRWVSLTLTLLALCRPIQT), serve as a signal peptide directing secretion. Residues 34-435 (WRCSLSLGNQ…LGLTAWVRET (402 aa)) are Extracellular-facing. N-linked (GlcNAc...) asparagine; by host glycans are attached at residues N129 and N203. Positions 212–215 (CAIC) match the CXXC motif. Cystine bridges form between C212–C215, C212–C392, and C384–C391. N230, N251, N256, N271, and N287 each carry an N-linked (GlcNAc...) asparagine; by host glycan. Residues 304–324 (VAALTLGLALSVGLTGINVAV) are fusion peptide. 2 coiled-coil regions span residues 330-376 (QRLT…WLYI) and 388-420 (NEPCCFLRIQNDSIIRLGDLQPLSQRVSTDWQW). N-linked (GlcNAc...) asparagine; by host glycosylation occurs at N351. Residues 365-381 (AQNRRGLDWLYIRLGFQ) are immunosuppression. A CX6CC motif is present at residues 384–392 (CPTINEPCC). N-linked (GlcNAc...) asparagine; by host glycosylation is present at N398. A helical transmembrane segment spans residues 436–456 (IHSVLSLFLLALFLLFLAPCL). The S-palmitoyl cysteine; by host moiety is linked to residue C455. At 457–515 (IKCLTSRLLKLLRQAPHFPEISLTPKPDSDYQALLPSAPEIYSHLSPVKPDYINLRPCP) the chain is on the cytoplasmic side.

In terms of assembly, the mature envelope protein (Env) consists of a trimer of SU-TM heterodimers attached by a labile interchain disulfide bond. Post-translationally, specific enzymatic cleavages in vivo yield mature proteins. Envelope glycoproteins are synthesized as an inactive precursor that is N-glycosylated and processed likely by host cell furin or by a furin-like protease in the Golgi to yield the mature SU and TM proteins. The cleavage site between SU and TM requires the minimal sequence [KR]-X-[KR]-R. In terms of processing, the CXXC motif is highly conserved across a broad range of retroviral envelope proteins. It is thought to participate in the formation of a labile disulfide bond possibly with the CX6CC motif present in the transmembrane protein. Isomerization of the intersubunit disulfide bond to an SU intrachain disulfide bond is thought to occur upon receptor recognition in order to allow membrane fusion. The transmembrane protein is palmitoylated.

It localises to the virion membrane. The protein localises to the host cell membrane. Functionally, the surface protein (SU) attaches the virus to the host cell by binding to its receptor. This interaction triggers the refolding of the transmembrane protein (TM) and is thought to activate its fusogenic potential by unmasking its fusion peptide. Fusion occurs at the host cell plasma membrane. Its function is as follows. The transmembrane protein (TM) acts as a class I viral fusion protein. Under the current model, the protein has at least 3 conformational states: pre-fusion native state, pre-hairpin intermediate state, and post-fusion hairpin state. During viral and target cell membrane fusion, the coiled coil regions (heptad repeats) assume a trimer-of-hairpins structure, positioning the fusion peptide in close proximity to the C-terminal region of the ectodomain. The formation of this structure appears to drive apposition and subsequent fusion of viral and target cell membranes. Membranes fusion leads to delivery of the nucleocapsid into the cytoplasm. This is Envelope glycoprotein (env) from Bovine leukemia virus (isolate American FLK) (BLV).